Here is a 688-residue protein sequence, read N- to C-terminus: Polyribonucleotide nucleotidyltransferase (688 aa).

Mg(2+) is bound by residues Asp484 and Asp490. The KH domain occupies 550–609 (PTTEIFNVAPDKIVEIIGQGGRVIKEIVEKFEVKIDLNKPSGEVKIMGNKERVLKTKEFI). The region spanning 626–688 (DEVLEAQVKR…NKGKIALDLA (63 aa)) is the S1 motif domain.

Belongs to the polyribonucleotide nucleotidyltransferase family. Mg(2+) serves as cofactor.

The protein resides in the cytoplasm. It catalyses the reaction RNA(n+1) + phosphate = RNA(n) + a ribonucleoside 5'-diphosphate. Functionally, involved in mRNA degradation. Catalyzes the phosphorolysis of single-stranded polyribonucleotides processively in the 3'- to 5'-direction. The sequence is that of Polyribonucleotide nucleotidyltransferase from Helicobacter pylori (strain HPAG1).